The primary structure comprises 254 residues: Triosephosphate isomerase (254 aa).

N9–K11 provides a ligand contact to substrate. The active-site Electrophile is H96. The active-site Proton acceptor is E168. G174 and S213 together coordinate substrate.

The protein belongs to the triosephosphate isomerase family. As to quaternary structure, homodimer.

It is found in the cytoplasm. It carries out the reaction D-glyceraldehyde 3-phosphate = dihydroxyacetone phosphate. The protein operates within carbohydrate biosynthesis; gluconeogenesis. Its pathway is carbohydrate degradation; glycolysis; D-glyceraldehyde 3-phosphate from glycerone phosphate: step 1/1. Involved in the gluconeogenesis. Catalyzes stereospecifically the conversion of dihydroxyacetone phosphate (DHAP) to D-glyceraldehyde-3-phosphate (G3P). This Buchnera aphidicola subsp. Schizaphis graminum (strain Sg) protein is Triosephosphate isomerase.